A 193-amino-acid polypeptide reads, in one-letter code: Peptidyl-tRNA hydrolase (193 aa).

Tyr-16 contacts tRNA. His-21 serves as the catalytic Proton acceptor. Phe-66, Asn-68, and Asn-114 together coordinate tRNA.

Belongs to the PTH family. Monomer.

It is found in the cytoplasm. It carries out the reaction an N-acyl-L-alpha-aminoacyl-tRNA + H2O = an N-acyl-L-amino acid + a tRNA + H(+). Hydrolyzes ribosome-free peptidyl-tRNAs (with 1 or more amino acids incorporated), which drop off the ribosome during protein synthesis, or as a result of ribosome stalling. In terms of biological role, catalyzes the release of premature peptidyl moieties from peptidyl-tRNA molecules trapped in stalled 50S ribosomal subunits, and thus maintains levels of free tRNAs and 50S ribosomes. The sequence is that of Peptidyl-tRNA hydrolase from Trichlorobacter lovleyi (strain ATCC BAA-1151 / DSM 17278 / SZ) (Geobacter lovleyi).